The sequence spans 216 residues: Phosphoenolpyruvate guanylyltransferase (216 aa).

3 residues coordinate phosphoenolpyruvate: threonine 143, glycine 159, and serine 162.

The protein belongs to the CofC family.

It catalyses the reaction phosphoenolpyruvate + GTP + H(+) = enolpyruvoyl-2-diphospho-5'-guanosine + diphosphate. It participates in cofactor biosynthesis; coenzyme F420 biosynthesis. In terms of biological role, guanylyltransferase that catalyzes the activation of phosphoenolpyruvate (PEP) as enolpyruvoyl-2-diphospho-5'-guanosine, via the condensation of PEP with GTP. It is involved in the biosynthesis of coenzyme F420, a hydride carrier cofactor. The sequence is that of Phosphoenolpyruvate guanylyltransferase from Streptomyces scabiei (strain 87.22).